We begin with the raw amino-acid sequence, 242 residues long: Small ribosomal subunit protein eS1 (242 aa).

Belongs to the eukaryotic ribosomal protein eS1 family. As to quaternary structure, component of the small ribosomal subunit. Mature ribosomes consist of a small (40S) and a large (60S) subunit. The 40S subunit contains about 33 different proteins and 1 molecule of RNA (18S). The 60S subunit contains about 49 different proteins and 3 molecules of RNA (25S, 5.8S and 5S).

It localises to the cytoplasm. The protein is Small ribosomal subunit protein eS1 of Lodderomyces elongisporus (strain ATCC 11503 / CBS 2605 / JCM 1781 / NBRC 1676 / NRRL YB-4239) (Yeast).